Here is an 81-residue protein sequence, read N- to C-terminus: ATP synthase subunit c (81 aa).

A run of 2 helical transmembrane segments spans residues 7–27 (AASV…PGIG) and 57–77 (LAFM…LLFA).

The protein belongs to the ATPase C chain family. F-type ATPases have 2 components, F(1) - the catalytic core - and F(0) - the membrane proton channel. F(1) has five subunits: alpha(3), beta(3), gamma(1), delta(1), epsilon(1). F(0) has four main subunits: a(1), b(1), b'(1) and c(10-14). The alpha and beta chains form an alternating ring which encloses part of the gamma chain. F(1) is attached to F(0) by a central stalk formed by the gamma and epsilon chains, while a peripheral stalk is formed by the delta, b and b' chains.

It is found in the cellular thylakoid membrane. Its function is as follows. F(1)F(0) ATP synthase produces ATP from ADP in the presence of a proton or sodium gradient. F-type ATPases consist of two structural domains, F(1) containing the extramembraneous catalytic core and F(0) containing the membrane proton channel, linked together by a central stalk and a peripheral stalk. During catalysis, ATP synthesis in the catalytic domain of F(1) is coupled via a rotary mechanism of the central stalk subunits to proton translocation. Key component of the F(0) channel; it plays a direct role in translocation across the membrane. A homomeric c-ring of between 10-14 subunits forms the central stalk rotor element with the F(1) delta and epsilon subunits. The chain is ATP synthase subunit c from Synechococcus elongatus (strain ATCC 33912 / PCC 7942 / FACHB-805) (Anacystis nidulans R2).